A 646-amino-acid polypeptide reads, in one-letter code: Mitochondrial distribution and morphology protein 10 (646 aa).

Disordered regions lie at residues 206–230 and 315–347; these read KSTSSSMDRLDSSNPSLSSSTSLSN and ETSSSASYPQRNGSVLHTGSSSSSEDTEAGGGL. Residues 207-230 show a composition bias toward low complexity; it reads STSSSMDRLDSSNPSLSSSTSLSN. Residues 315-333 show a composition bias toward polar residues; it reads ETSSSASYPQRNGSVLHTG.

This sequence belongs to the MDM10 family. In terms of assembly, component of the ER-mitochondria encounter structure (ERMES) or MDM complex, composed of MMM1, MDM10, MDM12 and MDM34. Associates with the mitochondrial outer membrane sorting assembly machinery SAM(core) complex.

It is found in the mitochondrion outer membrane. Its function is as follows. Component of the ERMES/MDM complex, which serves as a molecular tether to connect the endoplasmic reticulum and mitochondria. Components of this complex are involved in the control of mitochondrial shape and protein biogenesis and may function in phospholipid exchange. MDM10 is involved in the late assembly steps of the general translocase of the mitochondrial outer membrane (TOM complex). Functions in the TOM40-specific route of the assembly of outer membrane beta-barrel proteins, including the association of TOM40 with the receptor TOM22 and small TOM proteins. Can associate with the SAM(core) complex as well as the MDM12-MMM1 complex, both involved in late steps of the major beta-barrel assembly pathway, that is responsible for biogenesis of all outer membrane beta-barrel proteins. May act as a switch that shuttles between both complexes and channels precursor proteins into the TOM40-specific pathway. Plays a role in mitochondrial morphology and in the inheritance of mitochondria. This chain is Mitochondrial distribution and morphology protein 10, found in Mycosarcoma maydis (Corn smut fungus).